Here is a 2319-residue protein sequence, read N- to C-terminus: AT-rich interactive domain-containing protein 1B (2319 aa).

2 stretches are compositionally biased toward low complexity: residues 1 to 21 (MAARAAAAAAAAAARARARAG) and 43 to 56 (GARGAAAAAAAPGP). 6 disordered regions span residues 1–74 (MAAR…VHHH), 155–306 (VGEA…GGGG), 321–414 (APAS…GAGA), 487–546 (RFAG…AGAA), 577–1062 (QQRS…LMNT), and 1085–1129 (DMMS…KITK). Ala2 is modified (N-acetylalanine). Positions 57–68 (MLGGGGDGGGGL) are enriched in gly residues. Over residues 165–188 (QQHHHHHHAHHHHHHAHHLHHHHA) the composition is skewed to basic residues. Low complexity-rich tracts occupy residues 189 to 215 (LQQQLNQFQQQQQQQQQQQQQQQQQQH) and 343 to 363 (SPGMGMMHSASAAAAGAPGSM). Residues 365 to 379 (PLQNSHEGYPNSQCN) show a composition bias toward polar residues. Residues 388–414 (GAGGGGGGGGGGGGGSGGGGGGGGAGA) show a composition bias toward gly residues. At Arg487 the chain carries Asymmetric dimethylarginine. Polar residues predominate over residues 489–510 (AGQNQHPSGATPTLNQLLTSPS). The LXXLL motif lies at 502 to 506 (LNQLL). The span at 536–546 (PQSQAAAAGAA) shows a compositional bias: low complexity. Ser585 and Ser599 each carry phosphoserine. Position 608 is an asymmetric dimethylarginine (Arg608). A compositionally biased stretch (low complexity) spans 620–630 (SQPQQSSPYPG). Arg640 carries the asymmetric dimethylarginine modification. 6 stretches are compositionally biased toward low complexity: residues 651-670 (GAMAGMQYPQQQMPPQYGQQ), 677-687 (QQGQQPYYSQQ), 695-712 (PQAQYLPSQSQQRYQPQQ), 767-783 (SSAVSASGSTSSQGDQS), 811-832 (GSPVGSNQSRSGPISPASIPGS), and 840-849 (GSQSESSSHP). Residues 866–880 (TQRNPQMAQYGPQQT) show a composition bias toward polar residues. Residues 881–892 (GPSMSPHPSPGG) show a composition bias toward low complexity. Polar residues-rich tracts occupy residues 899–923 (SSFQQSNSSGTYGPQMSQYGPQGNY) and 947–958 (SANNQMHGQGPS). 2 stretches are compositionally biased toward low complexity: residues 980-994 (PGNMSSMTPSSPGMS) and 1014-1028 (EAAAAVMQAAANSAQ). Over residues 1029–1062 (SRQGSFPGMNQSGLMASSSPYSQPMNNSSSLMNT) the composition is skewed to polar residues. In terms of domain architecture, ARID spans 1136-1227 (EPERKLWVDR…YLFAFECKIE (92 aa)). Disordered stretches follow at residues 1230–1334 (EEPP…QQGM), 1346–1443 (EPNK…PNYK), 1475–1647 (NQYG…FLPS), and 1782–1852 (DHNA…KQAS). Polar residues-rich tracts occupy residues 1254-1273 (ANSGSLQGPQTPQSTGSNSM) and 1287-1304 (STPHGQMTPMQGGRSSTI). Positions 1305–1319 (SVHDPFSDVSDSSFP) are enriched in low complexity. 2 stretches are compositionally biased toward polar residues: residues 1320–1334 (KRNSMTPNAPYQQGM) and 1364–1388 (PFMTQGQMPNSSMQDMYNQSPSGAM). Positions 1426-1440 (PPYGGHQPGLYPQQP) are enriched in low complexity. The Nuclear localization signal signature appears at 1441–1460 (NYKRHMDGMYGPPAKRHEGD). Composition is skewed to polar residues over residues 1522–1534 (LQSSSSEGPQQNM) and 1579–1601 (ESQWPSHVSQRQPYMSSSASMQP). A phosphoserine mark is found at Ser1625, Ser1638, and Ser1642. Residues 1627–1641 (ASFQRSLENRMSPSK) show a composition bias toward polar residues. Basic and acidic residues predominate over residues 1782 to 1791 (DHNAARKDDS). Ser1798 is modified (phosphoserine). Acidic residues predominate over residues 1799–1823 (GKEEEDAECIDDDEEDEEDEEEDSE). Positions 1842–1852 (ADPKEKPKQAS) are enriched in basic and acidic residues. Lys1860 carries the post-translational modification N6-acetyllysine. Disordered stretches follow at residues 1904–1941 (FESKMEIPPRRRPPPPLSSAGRKKEQEGKGDSEEQQEK) and 1954–1973 (RPGALPEDANPGPQTESSKF). The span at 1925-1940 (RKKEQEGKGDSEEQQE) shows a compositional bias: basic and acidic residues. Positions 2119–2123 (LDGLL) match the LXXLL motif.

As to quaternary structure, component of SWI/SNF chromatin remodeling complexes, in some of which it can be mutually exclusive with ARID1B/BAF250B. The canonical complex contains a catalytic subunit (either SMARCA4/BRG1/BAF190A or SMARCA2/BRM/BAF190B) and at least SMARCE1, ACTL6A/BAF53, SMARCC1/BAF155, SMARCC2/BAF170, and SMARCB1/SNF5/BAF47. Other subunits specific to each of the complexes may also be present permitting several possible combinations developmentally and tissue specific. Component of the BAF (SWI/SNF-A) complex, which includes at least actin (ACTB), ARID1A/BAF250A, ARID1B/BAF250B, SMARCA2/BRM, SMARCA4/BRG1/BAF190A, ACTL6A/BAF53, ACTL6B/BAF53B, SMARCE1/BAF57, SMARCC1/BAF155, SMARCC2/BAF170, SMARCB1/SNF5/INI1, and one or more SMARCD1/BAF60A, SMARCD2/BAF60B, or SMARCD3/BAF60C. In muscle cells, the BAF complex also contains DPF3. Component of neural progenitors-specific chromatin remodeling complex (npBAF complex) composed of at least, ARID1A/BAF250A or ARID1B/BAF250B, SMARCD1/BAF60A, SMARCD3/BAF60C, SMARCA2/BRM/BAF190B, SMARCA4/BRG1/BAF190A, SMARCB1/BAF47, SMARCC1/BAF155, SMARCE1/BAF57, SMARCC2/BAF170, PHF10/BAF45A, ACTL6A/BAF53A and actin. Component of neuron-specific chromatin remodeling complex (nBAF complex) composed of at least, ARID1A/BAF250A or ARID1B/BAF250B, SMARCD1/BAF60A, SMARCD3/BAF60C, SMARCA2/BRM/BAF190B, SMARCA4/BRG1/BAF190A, SMARCB1/BAF47, SMARCC1/BAF155, SMARCE1/BAF57, SMARCC2/BAF170, DPF1/BAF45B, DPF3/BAF45C, ACTL6B/BAF53B and actin. Component of a SWI/SNF-like EBAFb complex, at least composed of SMARCA4/BRG1/BAF190A, SMARCB1/BAF47/SNF5, ACTL6A/BAF53A, SMARCE1/BAF57, SMARCD1/BAF60A, SMARCD2/BAF60B, SMARCC1/BAF155, SMARCC2/BAF170, ARID1B/BAF250B, MLLT1/ENL and actin. Interacts through its C-terminus with SMARCA2/BRM/BAF190B and SMARCA4/BRG1/BAF190A. Interacts with SMARCC1/BAF155. As to expression, widely expressed with high levels in heart, skeletal muscle and kidney.

Its subcellular location is the nucleus. In terms of biological role, involved in transcriptional activation and repression of select genes by chromatin remodeling (alteration of DNA-nucleosome topology). Component of SWI/SNF chromatin remodeling complexes that carry out key enzymatic activities, changing chromatin structure by altering DNA-histone contacts within a nucleosome in an ATP-dependent manner. Belongs to the neural progenitors-specific chromatin remodeling complex (npBAF complex) and the neuron-specific chromatin remodeling complex (nBAF complex). During neural development a switch from a stem/progenitor to a postmitotic chromatin remodeling mechanism occurs as neurons exit the cell cycle and become committed to their adult state. The transition from proliferating neural stem/progenitor cells to postmitotic neurons requires a switch in subunit composition of the npBAF and nBAF complexes. As neural progenitors exit mitosis and differentiate into neurons, npBAF complexes which contain ACTL6A/BAF53A and PHF10/BAF45A, are exchanged for homologous alternative ACTL6B/BAF53B and DPF1/BAF45B or DPF3/BAF45C subunits in neuron-specific complexes (nBAF). The npBAF complex is essential for the self-renewal/proliferative capacity of the multipotent neural stem cells. The nBAF complex along with CREST plays a role regulating the activity of genes essential for dendrite growth. Binds DNA non-specifically. The sequence is that of AT-rich interactive domain-containing protein 1B from Homo sapiens (Human).